We begin with the raw amino-acid sequence, 178 residues long: FXYD domain-containing ion transport regulator 5 (178 aa).

The signal sequence occupies residues 1–21; the sequence is MSPSGRLCLLTIVGLILPTRG. Topologically, residues 22–145 are extracellular; that stretch reads QTLKDTTSSS…FYDEHTLRKR (124 aa). The segment at 23 to 131 is disordered; sequence TLKDTTSSSS…QTLKPSGFHE (109 aa). Composition is skewed to low complexity over residues 26 to 36 and 68 to 77; these read DTTSSSSADST and TPQPQTQTQQ. A compositionally biased stretch (polar residues) spans 103-125; sequence DTTTLSERPSPSTDVQTDPQTLK. A helical membrane pass occupies residues 146-164; sequence GLLVAAVLFITGIIILTSG. Residues 165–178 are Cytoplasmic-facing; the sequence is KCRQLSRLCRNRCR.

It belongs to the FXYD family. Regulatory subunit of the sodium/potassium-transporting ATPase which is composed of a catalytic alpha subunit, a non-catalytic beta subunit and an additional regulatory subunit. The regulatory subunit, a member of the FXYD protein family, modulates the enzymatic activity in a tissue- and isoform-specific way by changing affinities of the Na+/K+-ATPase toward Na(+), K(+) or ATP. Post-translationally, glycosylated.

The protein localises to the cell membrane. It is found in the basolateral cell membrane. Associates with and regulates the activity of the sodium/potassium-transporting ATPase (NKA) which catalyzes the hydrolysis of ATP coupled with the exchange of Na(+) and K(+) ions across the plasma membrane. May increase NKA activity by increasing the apparent affinity for Na(+). Involved in down-regulation of E-cadherin which results in reduced cell adhesion. Promotes metastasis. This chain is FXYD domain-containing ion transport regulator 5 (FXYD5), found in Homo sapiens (Human).